The primary structure comprises 146 residues: Hemoglobin subunit beta (146 aa).

The 145-residue stretch at 2-146 (QWTAEEKQLI…VAHALARKYH (145 aa)) folds into the Globin domain. Heme b contacts are provided by H63 and H92.

Belongs to the globin family. Heterotetramer of two alpha chains and two beta chains. Red blood cells.

In terms of biological role, involved in oxygen transport from the lung to the various peripheral tissues. The sequence is that of Hemoglobin subunit beta (HBB) from Apus apus (Common swift).